The primary structure comprises 427 residues: Dihydroorotase (427 aa).

The Zn(2+) site is built by histidine 58 and histidine 60. Substrate-binding positions include 60 to 62 (HLR) and asparagine 92. Zn(2+) is bound by residues aspartate 150, histidine 177, and histidine 230. Position 276 (asparagine 276) interacts with substrate. Zn(2+) is bound at residue aspartate 303. Residue aspartate 303 is part of the active site. Residues histidine 307 and 321–322 (FG) each bind substrate.

It belongs to the metallo-dependent hydrolases superfamily. DHOase family. Class I DHOase subfamily. Zn(2+) serves as cofactor.

It carries out the reaction (S)-dihydroorotate + H2O = N-carbamoyl-L-aspartate + H(+). The protein operates within pyrimidine metabolism; UMP biosynthesis via de novo pathway; (S)-dihydroorotate from bicarbonate: step 3/3. Functionally, catalyzes the reversible cyclization of carbamoyl aspartate to dihydroorotate. The chain is Dihydroorotase from Macrococcus caseolyticus (strain JCSC5402) (Macrococcoides caseolyticum).